The following is a 313-amino-acid chain: Pseudouridine-5'-phosphate glycosidase (313 aa).

Catalysis depends on Glu34, which acts as the Proton donor. Lys95 and Val115 together coordinate substrate. Position 147 (Asp147) interacts with Mn(2+). 149–151 (SAD) contributes to the substrate binding site. The active-site Nucleophile is the Lys168.

This sequence belongs to the pseudouridine-5'-phosphate glycosidase family. As to quaternary structure, homotrimer. Mn(2+) is required as a cofactor.

The catalysed reaction is D-ribose 5-phosphate + uracil = psi-UMP + H2O. In terms of biological role, catalyzes the reversible cleavage of pseudouridine 5'-phosphate (PsiMP) to ribose 5-phosphate and uracil. Functions biologically in the cleavage direction, as part of a pseudouridine degradation pathway. The polypeptide is Pseudouridine-5'-phosphate glycosidase (Deinococcus radiodurans (strain ATCC 13939 / DSM 20539 / JCM 16871 / CCUG 27074 / LMG 4051 / NBRC 15346 / NCIMB 9279 / VKM B-1422 / R1)).